The sequence spans 266 residues: Undecaprenyl-diphosphatase 1 (266 aa).

8 helical membrane-spanning segments follow: residues 1–21 (MSII…FLPI), 39–59 (QGLA…VIYF), 83–103 (SKLG…GLLL), 113–133 (SAWV…YADA), 141–161 (IYQL…VAMI), 189–209 (FLLA…ELAL), 218–238 (TLLL…YMFL), and 244–264 (MGML…IVFL).

Belongs to the UppP family.

It localises to the cell inner membrane. The enzyme catalyses di-trans,octa-cis-undecaprenyl diphosphate + H2O = di-trans,octa-cis-undecaprenyl phosphate + phosphate + H(+). In terms of biological role, catalyzes the dephosphorylation of undecaprenyl diphosphate (UPP). Confers resistance to bacitracin. This is Undecaprenyl-diphosphatase 1 from Pseudoalteromonas translucida (strain TAC 125).